Consider the following 222-residue polypeptide: Peptide methionine sulfoxide reductase MsrA (222 aa).

C60 is an active-site residue.

Belongs to the MsrA Met sulfoxide reductase family.

The catalysed reaction is L-methionyl-[protein] + [thioredoxin]-disulfide + H2O = L-methionyl-(S)-S-oxide-[protein] + [thioredoxin]-dithiol. The enzyme catalyses [thioredoxin]-disulfide + L-methionine + H2O = L-methionine (S)-S-oxide + [thioredoxin]-dithiol. Has an important function as a repair enzyme for proteins that have been inactivated by oxidation. Catalyzes the reversible oxidation-reduction of methionine sulfoxide in proteins to methionine. This Pseudomonas entomophila (strain L48) protein is Peptide methionine sulfoxide reductase MsrA.